Consider the following 300-residue polypeptide: 4-hydroxy-tetrahydrodipicolinate synthase (300 aa).

T45 contributes to the pyruvate binding site. The active-site Proton donor/acceptor is the Y140. K169 acts as the Schiff-base intermediate with substrate in catalysis. A pyruvate-binding site is contributed by I210.

It belongs to the DapA family. In terms of assembly, homotetramer; dimer of dimers.

It localises to the cytoplasm. The catalysed reaction is L-aspartate 4-semialdehyde + pyruvate = (2S,4S)-4-hydroxy-2,3,4,5-tetrahydrodipicolinate + H2O + H(+). It participates in amino-acid biosynthesis; L-lysine biosynthesis via DAP pathway; (S)-tetrahydrodipicolinate from L-aspartate: step 3/4. Functionally, catalyzes the condensation of (S)-aspartate-beta-semialdehyde [(S)-ASA] and pyruvate to 4-hydroxy-tetrahydrodipicolinate (HTPA). This Helicobacter pylori (strain G27) protein is 4-hydroxy-tetrahydrodipicolinate synthase.